A 451-amino-acid polypeptide reads, in one-letter code: POU domain, class 3, transcription factor 1 (451 aa).

Disordered stretches follow at residues 1-21, 69-114, 127-154, 186-253, and 395-451; these read MATT…GTGP, AHPQ…GFHA, AWAQ…HQPQ, GLHH…PSSD, and KRMT…GSVQ. Composition is skewed to gly residues over residues 11-20, 76-85, and 95-112; these read GPGGGAGGTG, TGGGGGGDWA, and AGGG…GGGF. Positions 190-199 are enriched in basic and acidic residues; that stretch reads ALHEDGHEAQ. Residues 220-232 are compositionally biased toward low complexity; the sequence is AGGLHAAAAHLHP. A POU-specific domain is found at 247 to 321; sequence EDAPSSDDLE…LLNKWLEETD (75 aa). A DNA-binding region (homeobox) is located at residues 339–398; that stretch reads KRKKRTSIEVGVKGALESHFLKCPKPSAHEITGLADSLQLEKEVVRVWFCNRRQKEKRMT. A compositionally biased stretch (pro residues) spans 427–436; the sequence is PSAPPPPPPA.

This sequence belongs to the POU transcription factor family. Class-3 subfamily. In terms of tissue distribution, expressed in embryonal stem cells and in the developing brain.

It localises to the nucleus. Functionally, transcription factor that binds to the octamer motif (5'-ATTTGCAT-3'). Acts as a transcriptional activator when binding cooperatively with SOX4, SOX11, or SOX12 to gene promoters. Acts as a transcriptional repressor of myelin-specific genes. In Homo sapiens (Human), this protein is POU domain, class 3, transcription factor 1 (POU3F1).